We begin with the raw amino-acid sequence, 425 residues long: Transmembrane protein 184A (425 aa).

Helical transmembrane passes span 51–71 (LFLT…TALL), 96–116 (LLFI…LLGG), 133–153 (FVIY…SAIM), 189–209 (TLQF…LQAF), 226–246 (VTLV…LFYF), 261–281 (FLTI…LAIL), and 303–323 (LAAG…SLAL). The tract at residues 375-425 (QYTQQSTHEAPGPGQGGHPSPSTHPGPASGSGGGKKSRNIEKRMLIPSEDL) is disordered. Residues 392–402 (HPSPSTHPGPA) are compositionally biased toward low complexity.

Belongs to the TMEM184 family. Expressed in vascular cells (at protein level).

Its subcellular location is the cell membrane. It localises to the cytoplasm. The protein localises to the perinuclear region. The protein resides in the early endosome membrane. It is found in the endosome. Its subcellular location is the cytoplasmic vesicle. It localises to the secretory vesicle membrane. The protein localises to the cytoplasmic vesicle membrane. Its function is as follows. Acts as a heparin receptor in vascular cells. May be involved in vesicle transport in exocrine cells and Sertoli cells. This chain is Transmembrane protein 184A (Tmem184a), found in Rattus norvegicus (Rat).